The sequence spans 247 residues: Protein FAM133B (247 aa).

Disordered stretches follow at residues 19–38 (SRGP…NRPR) and 70–247 (KKEL…PDSP). Positions 70 to 80 (KKELEKHREKL) are enriched in basic and acidic residues. Ser82 carries the post-translational modification Phosphoserine. The segment covering 89–102 (KKRQRKKKEKKKSG) has biased composition (basic residues). Over residues 103 to 119 (RYSSSSSSSSDSSSSSS) the composition is skewed to low complexity. Residues 128–140 (QGKRRKKKKNRSH) show a composition bias toward basic residues. Positions 165–176 (KDGTEKEKDIKG) are enriched in basic and acidic residues. A phosphoserine mark is found at Ser191, Ser192, Ser194, and Ser196. Residues 211–221 (SSEEREKATEK) are compositionally biased toward basic and acidic residues. Residues 222–239 (TKKKKKHKKHSKKKKKKA) are compositionally biased toward basic residues.

It belongs to the FAM133 family.

This Homo sapiens (Human) protein is Protein FAM133B (FAM133B).